The following is a 337-amino-acid chain: RNA 3'-terminal phosphate cyclase (337 aa).

Residues glutamine 101 and 282 to 285 contribute to the ATP site; that span reads HMSD. The active-site Tele-AMP-histidine intermediate is the histidine 306.

This sequence belongs to the RNA 3'-terminal cyclase family. Type 1 subfamily.

Its subcellular location is the cytoplasm. It catalyses the reaction a 3'-end 3'-phospho-ribonucleotide-RNA + ATP = a 3'-end 2',3'-cyclophospho-ribonucleotide-RNA + AMP + diphosphate. Functionally, catalyzes the conversion of 3'-phosphate to a 2',3'-cyclic phosphodiester at the end of RNA. The mechanism of action of the enzyme occurs in 3 steps: (A) adenylation of the enzyme by ATP; (B) transfer of adenylate to an RNA-N3'P to produce RNA-N3'PP5'A; (C) and attack of the adjacent 2'-hydroxyl on the 3'-phosphorus in the diester linkage to produce the cyclic end product. The biological role of this enzyme is unknown but it is likely to function in some aspects of cellular RNA processing. The polypeptide is RNA 3'-terminal phosphate cyclase (Saccharolobus islandicus (strain M.16.27) (Sulfolobus islandicus)).